We begin with the raw amino-acid sequence, 547 residues long: MVRLNHAASYFMPIFCSTRPHIVILSALFSISLFSLFYASSELLLHQYDDPLMFKPNSQDYFRTFLLGLFSPFLYYFLKTFLFNINQRFLILNLIVDFPINDVFMLLILIGLAYPQVQDHEGGTIKHKECSWHIIPRQAYIFGISWALGEFTICIIGNLFNYQEIADPNINSGFTHQESANTYCNNNDMSHNDDCGCSTEYRPNVVDRSDITLSKCIEVRNDSSSISNNVYSSEYHPIKPLRSSSSTYGSIRQQPHENKKQLHVPDNSQDDTIIMMNPIDNSLKLTTLDTGDLSFPIDEEQPILKKSFGYTWAVPNENTQNTTKSFTPIKRFIAFSTAYQLVTGLLLMILVVGSNIMLTIGESLILSMYFVYVRGHEGLFTPVVNYFGSRTISNFILCVIIPFISLNFLINTSIYLRRELDDWFNNSQGEFEDDDENTISKRVATNQEYQHPLSANYISMDSPDVINSSPGHFGMNSGQLLGNTTLYYGSLNGDDDDMTNDSALLRFCKKLVKNWRALARNDSFVLGVMVSWSLLVFVTGILSTVYI.

Residues 1–19 lie on the Cytoplasmic side of the membrane; the sequence is MVRLNHAASYFMPIFCSTR. Residues 20-40 traverse the membrane as a helical segment; the sequence is PHIVILSALFSISLFSLFYAS. Topologically, residues 41–64 are vacuolar; the sequence is SELLLHQYDDPLMFKPNSQDYFRT. A helical transmembrane segment spans residues 65–85; the sequence is FLLGLFSPFLYYFLKTFLFNI. Residues 86–89 lie on the Cytoplasmic side of the membrane; the sequence is NQRF. Residues 90–110 form a helical membrane-spanning segment; that stretch reads LILNLIVDFPINDVFMLLILI. Over 111 to 139 the chain is Vacuolar; that stretch reads GLAYPQVQDHEGGTIKHKECSWHIIPRQA. A helical membrane pass occupies residues 140–160; that stretch reads YIFGISWALGEFTICIIGNLF. At 161–340 the chain is on the cytoplasmic side; that stretch reads NYQEIADPNI…RFIAFSTAYQ (180 aa). Ser-225 is modified (phosphoserine). The segment at 237–271 is disordered; the sequence is PIKPLRSSSSTYGSIRQQPHENKKQLHVPDNSQDD. Polar residues predominate over residues 242–253; sequence RSSSSTYGSIRQ. Residues 341-361 form a helical membrane-spanning segment; sequence LVTGLLLMILVVGSNIMLTIG. At 362–394 the chain is on the vacuolar side; that stretch reads ESLILSMYFVYVRGHEGLFTPVVNYFGSRTISN. The chain crosses the membrane as a helical span at residues 395–415; sequence FILCVIIPFISLNFLINTSIY. Residues 416 to 523 are Cytoplasmic-facing; the sequence is LRRELDDWFN…NWRALARNDS (108 aa). The helical transmembrane segment at 524–544 threads the bilayer; sequence FVLGVMVSWSLLVFVTGILST. Residues 545-547 are Vacuolar-facing; that stretch reads VYI.

It localises to the vacuole membrane. This is an uncharacterized protein from Saccharomyces cerevisiae (strain ATCC 204508 / S288c) (Baker's yeast).